A 447-amino-acid chain; its full sequence is Chordin-like protein 1 (447 aa).

The first 22 residues, 1-22 (MDGMKYIISLFFIFVFLEGSKT), serve as a signal peptide directing secretion. VWFC domains follow at residues 30–95 (TYCV…PRCP) and 108–174 (KSCE…RVCR). N-linked (GlcNAc...) asparagine glycosylation is present at Asn-113. The Cell attachment site motif lies at 174–176 (RGD). The tract at residues 200 to 224 (SYLRSPYDPPPNRQAGGLPRFPGSR) is disordered. The region spanning 253–318 (QVCVSNGKTY…IDGKCCKVCP (66 aa)) is the VWFC 3 domain. Residue Asn-286 is glycosylated (N-linked (GlcNAc...) asparagine).

Post-translationally, may be glycosylated. As to expression, expressed in heart, brain, lung, liver, kidney and testis.

It is found in the secreted. Its function is as follows. Seems to antagonize the function of BMP4 by binding to it and preventing its interaction with receptors. Alters the fate commitment of neural stem cells from gliogenesis to neurogenesis. Contributes to neuronal differentiation of neural stem cells in the brain by preventing the adoption of a glial fate. May play a crucial role in dorsoventral axis formation. Antagonizes the function of BMP7 and may thus play an important role in the embryonic bone formation. Shows no inhibitory effect on the inducing activity of BMP2. Plays a role during anterior segment eye development. This Mus musculus (Mouse) protein is Chordin-like protein 1 (Chrdl1).